A 335-amino-acid polypeptide reads, in one-letter code: Olfactory receptor 52B6 (335 aa).

Over 1-45 (MAQVRALHKIMALFSANSIGAMNNSDTRIAGCFLTGIPGLEQLHI) the chain is Extracellular. A glycan (N-linked (GlcNAc...) asparagine) is linked at asparagine 23. The chain crosses the membrane as a helical span at residues 46-66 (WLSIPFCIMYITALEGNGILI). Topologically, residues 67–74 (CVILSQAI) are cytoplasmic. Residues 75-95 (LHEPMYIFLSMLASADVLLST) traverse the membrane as a helical segment. Topologically, residues 96 to 119 (TTMPKALANLWLGYSLISFDGCLT) are extracellular. Cysteine 117 and cysteine 208 are joined by a disulfide. The helical transmembrane segment at 120–139 (QMFFIHFLFIHSAVLLAMAF) threads the bilayer. Residues 140–158 (DRYVAICSPLRYVTILTSK) lie on the Cytoplasmic side of the membrane. Residues 159 to 179 (VIGKIVTAALSHSFIIMFPSI) traverse the membrane as a helical segment. The Extracellular segment spans residues 180–215 (FLLEHLHYCQINIIAHTFCEHMGIAHLSCSDISINV). The helical transmembrane segment at 216–236 (WYGLAAALLSTGLDIMLITVS) threads the bilayer. Topologically, residues 237-256 (YIHILQAVFRLLSQDARSKA) are cytoplasmic. A helical membrane pass occupies residues 257–277 (LSTCGSHICVILLFYVPALFS). The Extracellular portion of the chain corresponds to 278–293 (VFAYRFGGRSVPCYVH). The chain crosses the membrane as a helical span at residues 294–314 (ILLASLYVVIPPMLNPVIYGV). The Cytoplasmic portion of the chain corresponds to 315 to 335 (RTKPILEGAKQMFSNLAKGSK).

It belongs to the G-protein coupled receptor 1 family.

Its subcellular location is the cell membrane. Its function is as follows. Odorant receptor. This Homo sapiens (Human) protein is Olfactory receptor 52B6 (OR52B6).